We begin with the raw amino-acid sequence, 142 residues long: Cystatin-8 (142 aa).

A signal peptide spans 1–21 (MPRCRWLSLILLTIPLALVAR). Residues N27 and N39 are each glycosylated (N-linked (GlcNAc...) asparagine). The Secondary area of contact motif lies at 77–81 (QVTNL). Disulfide bonds link C95–C105 and C119–C139.

It belongs to the cystatin family. Proximal caput region of the epididymis. Lower expression in the testis. Within the testis it is localized to the elongating spermatids, whereas within the epididymis it is exclusively synthesized by the proximal caput epithelium.

It localises to the secreted. In terms of biological role, performs a specialized role during sperm development and maturation. In Homo sapiens (Human), this protein is Cystatin-8 (CST8).